Here is a 473-residue protein sequence, read N- to C-terminus: Lactococcin A secretion protein LcnD-like (473 aa).

At 1-21 the chain is on the cytoplasmic side; sequence MFDKKLLESSELYDKRYRNFS. A helical transmembrane segment spans residues 22 to 44; it reads TLIILPLFILLVGGVIFTFFAHK. The Extracellular portion of the chain corresponds to 45–473; it reads ELTVISTGSI…FLDKIMGRTS (429 aa).

Belongs to the membrane fusion protein (MFP) (TC 8.A.1) family.

Its subcellular location is the cell membrane. In terms of biological role, involved in the secretion of a lactococcin. The protein is Lactococcin A secretion protein LcnD-like (lcnD) of Lactococcus lactis subsp. lactis (strain IL1403) (Streptococcus lactis).